Here is a 483-residue protein sequence, read N- to C-terminus: UDP-glycosyltransferase 85C1 (483 aa).

Residues S304, 360–361 (WC), 378–386 (HCGWGSIIE), and 400–403 (IGDQ) each bind UDP-alpha-D-glucose.

The protein belongs to the UDP-glycosyltransferase family.

In terms of biological role, may glycosylate diterpenes or flavonols in leaves. The protein is UDP-glycosyltransferase 85C1 of Stevia rebaudiana (Stevia).